Here is a 644-residue protein sequence, read N- to C-terminus: MFQDNPLLAQLKQQLHSQTPRAEGVVKATEKGFGFLEVDAQKSYFIPPPQMKKVMHGDRIVAVIHTEKERESAEPEELIEPFLTRFVGKVQGKNDRLSIVPDHPLLKDAIPCRAARGVQHEFKEGDWAVAEMRRHPLKGDRSFYADLTQYITFADDHFVPWWVTLARHNLEKEAPNGVATEMLDEGLERQDLTALNFVTIDSASTEDMDDALYAEELADGRLQLTVAIADPTAWIAEGSKLDNAAKIRAFTNYLPGFNIPMLPRELSDDLCSLRANEVRPALACRMIISADGTIDDDIAFFAATIESKAKLAYDNVSDWLENNGTWQPDNEGIAQQIRLLHRICLSRSEWRHHHALVFKDRPDYRFVLGEKGEVLDIVAEPRRIANRIVEESMIAANLCAARVLRDKLGFGIYNVHTGFDPANADALAALLKTHGLHVDAEEVLTLEGFCKLRRELDAQPSGFLDSRIRRFQSFAEISTEPGPHFGLGLEAYATWTSPIRKYGDMINHRLLKAVIKGEAIARPQEDITQQMAERRRLNRMAERDVGDWLYARFLNDKAGTNTRFAAEIIDVSRGGMRVRLVDNGAIAFIPAPFLHAVHDELVCSQENGTVQIKGETVYKVTDVIDVTIAEVRMETRSIIARPAA.

The 328-residue stretch at 189-516 (RQDLTALNFV…NHRLLKAVIK (328 aa)) folds into the RNB domain. The region spanning 561–643 (NTRFAAEIID…ETRSIIARPA (83 aa)) is the S1 motif domain.

It belongs to the RNR ribonuclease family. RNase II subfamily.

The protein resides in the cytoplasm. The enzyme catalyses Exonucleolytic cleavage in the 3'- to 5'-direction to yield nucleoside 5'-phosphates.. Its function is as follows. Involved in mRNA degradation. Hydrolyzes single-stranded polyribonucleotides processively in the 3' to 5' direction. The sequence is that of Exoribonuclease 2 from Salmonella gallinarum (strain 287/91 / NCTC 13346).